Reading from the N-terminus, the 65-residue chain is Conotoxin TsMRCL-05 (65 aa).

An N-terminal signal peptide occupies residues 1–22 (MHCLPVLVILLLLIASTPSVDA). Positions 23–52 (RPNPKDDVPLASFHGAVNAKRYLRTLWNSR) are excised as a propeptide. Ile64 carries the isoleucine amide modification.

Belongs to the conotoxin T superfamily. Post-translationally, contains 2 disulfide bonds that can be either 'C1-C3, C2-C4' or 'C1-C4, C2-C3', since these disulfide connectivities have been observed for conotoxins with cysteine framework V (for examples, see AC P0DQQ7 and AC P81755). Expressed by the venom duct.

Its subcellular location is the secreted. The protein is Conotoxin TsMRCL-05 of Conus tessulatus (Tessellate cone).